A 508-amino-acid chain; its full sequence is Steroid 17-alpha-hydroxylase/17,20 lyase (508 aa).

Substrate is bound at residue N202. C442 contacts heme.

It belongs to the cytochrome P450 family. It depends on heme as a cofactor.

Its subcellular location is the endoplasmic reticulum membrane. The protein resides in the microsome membrane. The enzyme catalyses a C21-steroid + reduced [NADPH--hemoprotein reductase] + O2 = a 17alpha-hydroxy-C21-steroid + oxidized [NADPH--hemoprotein reductase] + H2O + H(+). It catalyses the reaction progesterone + reduced [NADPH--hemoprotein reductase] + O2 = 17alpha-hydroxyprogesterone + oxidized [NADPH--hemoprotein reductase] + H2O + H(+). It carries out the reaction pregnenolone + reduced [NADPH--hemoprotein reductase] + O2 = 17alpha-hydroxypregnenolone + oxidized [NADPH--hemoprotein reductase] + H2O + H(+). The catalysed reaction is 17alpha-hydroxyprogesterone + reduced [NADPH--hemoprotein reductase] + O2 = androst-4-ene-3,17-dione + acetate + oxidized [NADPH--hemoprotein reductase] + H2O + 2 H(+). The enzyme catalyses 17alpha-hydroxyprogesterone + reduced [NADPH--hemoprotein reductase] + O2 = 16alpha,17alpha-dihydroxyprogesterone + oxidized [NADPH--hemoprotein reductase] + H2O + H(+). It catalyses the reaction 16alpha,17alpha-dihydroxyprogesterone + reduced [NADPH--hemoprotein reductase] + O2 = 6beta,16alpha,17alpha-trihydroxyprogesterone + oxidized [NADPH--hemoprotein reductase] + H2O + H(+). It carries out the reaction 17alpha-hydroxypregnenolone + reduced [NADPH--hemoprotein reductase] + O2 = 3beta-hydroxyandrost-5-en-17-one + acetate + oxidized [NADPH--hemoprotein reductase] + H2O + 2 H(+). The catalysed reaction is 16alpha,17alpha-dihydroxypregnenolone + reduced [NADPH--hemoprotein reductase] + O2 = 3beta,16alpha-dihydroxy-androst-5-en-17-one + acetate + oxidized [NADPH--hemoprotein reductase] + H2O + 2 H(+). The enzyme catalyses 3beta-hydroxyandrost-5-en-17-one + reduced [NADPH--hemoprotein reductase] + O2 = 3beta,16alpha-dihydroxy-androst-5-en-17-one + oxidized [NADPH--hemoprotein reductase] + H2O + H(+). It catalyses the reaction androst-4-ene-3,17-dione + reduced [NADPH--hemoprotein reductase] + O2 = 16alpha-hydroxyandrost-4-ene-3,17-dione + oxidized [NADPH--hemoprotein reductase] + H2O + H(+). It participates in steroid hormone biosynthesis. Its pathway is steroid biosynthesis; glucocorticoid biosynthesis. Its activity is regulated as follows. Regulated predominantly by intracellular cAMP levels. The 17,20-lyase activity is stimulated by cytochrome b5, which acts as an allosteric effector increasing the Vmax of the lyase activity. Functionally, a cytochrome P450 monooxygenase involved in corticoid and androgen biosynthesis. Catalyzes 17-alpha hydroxylation of C21 steroids, which is common for both pathways. A second oxidative step, required only for androgen synthesis, involves an acyl-carbon cleavage. The 17-alpha hydroxy intermediates, as part of adrenal glucocorticoids biosynthesis pathway, are precursors of cortisol. Hydroxylates steroid hormones, pregnenolone and progesterone to form 17-alpha hydroxy metabolites, followed by the cleavage of the C17-C20 bond to form C19 steroids, dehydroepiandrosterone (DHEA) and androstenedione. Has 16-alpha hydroxylase activity. Catalyzes 16-alpha hydroxylation of 17-alpha hydroxy pregnenolone, followed by the cleavage of the C17-C20 bond to form 16-alpha-hydroxy DHEA. Also 16-alpha hydroxylates androgens, relevant for estriol synthesis. Mechanistically, uses molecular oxygen inserting one oxygen atom into a substrate, and reducing the second into a water molecule, with two electrons provided by NADPH via cytochrome P450 reductase (CPR; NADPH-ferrihemoprotein reductase). The protein is Steroid 17-alpha-hydroxylase/17,20 lyase (CYP17A1) of Felis catus (Cat).